Consider the following 860-residue polypeptide: MSENNTKLKYLCDLEEKGRRQCMESEILVDKKKFFITFPYPYMNGKLHLGHLFSISKADIFSYYKEMQGFNVLFPFGFHCTGMPISASAKKLKMELANEGEIDISVVNILKSLGFKLYCSGKCTNVECICQFTDPFHWCRTFPKYCKASLVKYDANIDWRRSFITTDVNPYYDSFVKYQFTKLKNCNYISFGKRYSIFCPVDNQICLDHDRRKGEGVKPIPIVLAILGNNILVPVQEKDLNTIIDNNVEIVTQKEIQWIQFSINNDVYVAEEDIYNNIKYQVENVYKIKTVTLDGLYPYIIYVNSNIRKSKINNKNKILTENIYNKLIADRHEKMELIKYDKFIVCYVPEDTVISRSGGKCTVALMDQWFLDYSNPEWKEKTKICLNKLTASKDTKEKLELALNWINKWGFSRNFGLGTKFPYDNSVLIDSLSDSTIYMAFYTVKHLLFKDLEGKEPLFPIKYMGYAFWEYVFGNSNEINFIDPNDLNAKKIVEDARSQFNYFYPIDLRVSGKDLINNHLIFFLMNHVAIFKENNWPKRIYTNGHLLLNGLKMSKSEGNFLSVDTALERFGTSATRMCLAICGDTNEDANFVESMANSFVLKLYTLSQNIFLISSNNQSVNVADYTLIDYYLISSIKINEEKTFTSYENIVYRDVIKYGFYNNLDTIETYEMFGGSNSNLKHWAYYNMMKQLYPVIPSLARYFLNEVLTDISIEFKNIINQQYISGIEYIKELIHKINKFTKHDAKKVNLTLIKHYPPWKELCMKKIDELKLIHKNNNDLKKIVLKECSQFIGENNRKKGILFCMDYLLYKEKYIINFDEELYTNTFKSIIEQETKKKIIILIKDDSTKGEPLCPEINSC.

The 'HIGH' region signature appears at 41–51; the sequence is PYMNGKLHLGH. The short motif at 552–556 is the 'KMSKS' region element; it reads KMSKS. Lys555 is a binding site for ATP.

The protein belongs to the class-I aminoacyl-tRNA synthetase family.

Its subcellular location is the cytoplasm. The enzyme catalyses tRNA(Leu) + L-leucine + ATP = L-leucyl-tRNA(Leu) + AMP + diphosphate. The chain is Probable leucine--tRNA ligase, cytoplasmic from Enterocytozoon bieneusi (strain H348) (Microsporidian parasite).